The chain runs to 637 residues: Biosynthetic arginine decarboxylase (637 aa).

Lys101 bears the N6-(pyridoxal phosphate)lysine mark. 286 to 296 (FDVGGGLAVDY) contacts substrate.

It belongs to the Orn/Lys/Arg decarboxylase class-II family. SpeA subfamily. Mg(2+) serves as cofactor. Pyridoxal 5'-phosphate is required as a cofactor.

The enzyme catalyses L-arginine + H(+) = agmatine + CO2. It functions in the pathway amine and polyamine biosynthesis; agmatine biosynthesis; agmatine from L-arginine: step 1/1. Its function is as follows. Catalyzes the biosynthesis of agmatine from arginine. The polypeptide is Biosynthetic arginine decarboxylase (Shewanella baltica (strain OS195)).